The sequence spans 281 residues: Aspartate/glutamate leucyltransferase (281 aa).

This sequence belongs to the R-transferase family. Bpt subfamily.

Its subcellular location is the cytoplasm. The catalysed reaction is N-terminal L-glutamyl-[protein] + L-leucyl-tRNA(Leu) = N-terminal L-leucyl-L-glutamyl-[protein] + tRNA(Leu) + H(+). It carries out the reaction N-terminal L-aspartyl-[protein] + L-leucyl-tRNA(Leu) = N-terminal L-leucyl-L-aspartyl-[protein] + tRNA(Leu) + H(+). Functions in the N-end rule pathway of protein degradation where it conjugates Leu from its aminoacyl-tRNA to the N-termini of proteins containing an N-terminal aspartate or glutamate. In Paracoccus denitrificans (strain Pd 1222), this protein is Aspartate/glutamate leucyltransferase.